A 923-amino-acid chain; its full sequence is Protocadherin gamma-B4 (923 aa).

The first 30 residues, 1–30 (MGSGAGELGRAERLPVLFLFLLSLFCPALC), serve as a signal peptide directing secretion. 6 Cadherin domains span residues 31–133 (EQIR…TPKF), 134–242 (TQNS…APVF), 243–345 (SQDI…APEV), 346–450 (IFQS…APVF), 451–560 (SQSS…APRV), and 568–673 (DGSA…LPDI). Residues 31-689 (EQIRYRIPEE…SDLEAELQFY (659 aa)) are Extracellular-facing. Residues asparagine 417 and asparagine 543 are each glycosylated (N-linked (GlcNAc...) asparagine). The helical transmembrane segment at 690–710 (LVVALALISVLFLVAMILAIA) threads the bilayer. The Cytoplasmic segment spans residues 711-923 (LRLRRSSSPA…KKKSGKKEKK (213 aa)). Disordered regions lie at residues 797-832 (SHQQ…WPNN) and 893-923 (ATLT…KEKK). Basic residues predominate over residues 913-923 (NKKKSGKKEKK).

It is found in the cell membrane. Potential calcium-dependent cell-adhesion protein. May be involved in the establishment and maintenance of specific neuronal connections in the brain. This chain is Protocadherin gamma-B4 (PCDHGB4), found in Pan troglodytes (Chimpanzee).